Consider the following 259-residue polypeptide: MICRFIDTHCHFDFPPFSGDEEASLQRAAQAGVGKIIVPATEAENFARVLALAENYQPLYAALGLHPGMLEKHSDVSLEQLQQALERRPAKVVAVGEIGLDLFGDDPQFERQQWLLDEQLKLAKRYDLPVILHSRRTHDKLAMHLKRHDLPRTGVVHGFSGSLQQAERFVQLGYKIGVGGTITYPRASKTRDVIAKLPLASLLLETDAPDMPLNGFQGQPNRPEQAARVFAVLCELRREPADEIAQALLNNTYTLFNVP.

A divalent metal cation-binding residues include His-9, His-11, Glu-97, His-133, His-157, and Asp-207.

Belongs to the metallo-dependent hydrolases superfamily. TatD-type hydrolase family. The cofactor is a divalent metal cation.

This is an uncharacterized protein from Escherichia coli (strain K12).